A 225-amino-acid chain; its full sequence is Enolase-phosphatase E1 (225 aa).

It belongs to the HAD-like hydrolase superfamily. MasA/MtnC family. Monomer. Requires Mg(2+) as cofactor.

It carries out the reaction 5-methylsulfanyl-2,3-dioxopentyl phosphate + H2O = 1,2-dihydroxy-5-(methylsulfanyl)pent-1-en-3-one + phosphate. The protein operates within amino-acid biosynthesis; L-methionine biosynthesis via salvage pathway; L-methionine from S-methyl-5-thio-alpha-D-ribose 1-phosphate: step 3/6. Its pathway is amino-acid biosynthesis; L-methionine biosynthesis via salvage pathway; L-methionine from S-methyl-5-thio-alpha-D-ribose 1-phosphate: step 4/6. Its function is as follows. Bifunctional enzyme that catalyzes the enolization of 2,3-diketo-5-methylthiopentyl-1-phosphate (DK-MTP-1-P) into the intermediate 2-hydroxy-3-keto-5-methylthiopentenyl-1-phosphate (HK-MTPenyl-1-P), which is then dephosphorylated to form the acireductone 1,2-dihydroxy-3-keto-5-methylthiopentene (DHK-MTPene). This Shewanella denitrificans (strain OS217 / ATCC BAA-1090 / DSM 15013) protein is Enolase-phosphatase E1.